The sequence spans 314 residues: MIKVVFMGTPDFSVPVLRRLIEDGYEVVGVVTQPDRPVGRKKVLTPTPVKVEAEKHGIPVLQPLKIREKDEYEKVLALEPDLIVTAAFGQIVPNEILEAPKYGCINVHASLLPELRGGAPIHYAIMEGKEKTGITIMYMVEKLDAGDILTQVEVEIEERETTGSLFDKLSEAGAHLLSKTVPLLIQGKLEPIKQNEEEVTFAYNIKREQEKIDWTKTGEEVYNHIRGLNPWPVAYTTLAGQVVKVWWGEKVPITEPAEAGTIVAIEEDGFVVATSNETGVKITELQPSGKKRMSCSQFLRGTKPEIGTKLGENA.

110 to 113 (SLLP) lines the (6S)-5,6,7,8-tetrahydrofolate pocket.

Belongs to the Fmt family.

It catalyses the reaction L-methionyl-tRNA(fMet) + (6R)-10-formyltetrahydrofolate = N-formyl-L-methionyl-tRNA(fMet) + (6S)-5,6,7,8-tetrahydrofolate + H(+). Its function is as follows. Attaches a formyl group to the free amino group of methionyl-tRNA(fMet). The formyl group appears to play a dual role in the initiator identity of N-formylmethionyl-tRNA by promoting its recognition by IF2 and preventing the misappropriation of this tRNA by the elongation apparatus. This is Methionyl-tRNA formyltransferase from Bacillus cereus (strain B4264).